Reading from the N-terminus, the 1070-residue chain is Carbamoyl phosphate synthase large chain (1070 aa).

The carboxyphosphate synthetic domain stretch occupies residues 1–401 (MPKRDDIKTI…ALLKAVRSLE (401 aa)). ATP contacts are provided by Arg-129, Arg-169, Gly-175, Gly-176, Lys-208, Ile-210, Glu-215, Gly-241, Ile-242, His-243, Gln-284, and Glu-298. The ATP-grasp 1 domain maps to 133–327 (RDLMNELGEP…IAKLAAKIAV (195 aa)). 3 residues coordinate Mg(2+): Gln-284, Glu-298, and Asn-300. Mn(2+) contacts are provided by Gln-284, Glu-298, and Asn-300. An oligomerization domain region spans residues 402–546 (IGADHLLLEE…YSTYEDENES (145 aa)). Residues 547 to 929 (IRSSKESVIV…ALYKGFVASG (383 aa)) form a carbamoyl phosphate synthetic domain region. The 191-residue stretch at 671–861 (EKALEILQIP…MANVATRVIL (191 aa)) folds into the ATP-grasp 2 domain. ATP is bound by residues Arg-707, Arg-746, Val-748, Glu-752, Gly-777, Val-778, His-779, Ser-780, Gln-820, and Glu-832. Mg(2+)-binding residues include Gln-820, Glu-832, and Asn-834. Gln-820, Glu-832, and Asn-834 together coordinate Mn(2+). The MGS-like domain maps to 930–1070 (TTMHDYGTVL…SEVKQPKARV (141 aa)). The interval 930 to 1070 (TTMHDYGTVL…SEVKQPKARV (141 aa)) is allosteric domain.

It belongs to the CarB family. As to quaternary structure, composed of two chains; the small (or glutamine) chain promotes the hydrolysis of glutamine to ammonia, which is used by the large (or ammonia) chain to synthesize carbamoyl phosphate. Tetramer of heterodimers (alpha,beta)4. Mg(2+) serves as cofactor. The cofactor is Mn(2+).

The enzyme catalyses hydrogencarbonate + L-glutamine + 2 ATP + H2O = carbamoyl phosphate + L-glutamate + 2 ADP + phosphate + 2 H(+). It carries out the reaction hydrogencarbonate + NH4(+) + 2 ATP = carbamoyl phosphate + 2 ADP + phosphate + 2 H(+). It functions in the pathway amino-acid biosynthesis; L-arginine biosynthesis; carbamoyl phosphate from bicarbonate: step 1/1. It participates in pyrimidine metabolism; UMP biosynthesis via de novo pathway; (S)-dihydroorotate from bicarbonate: step 1/3. Its function is as follows. Large subunit of the glutamine-dependent carbamoyl phosphate synthetase (CPSase). CPSase catalyzes the formation of carbamoyl phosphate from the ammonia moiety of glutamine, carbonate, and phosphate donated by ATP, constituting the first step of 2 biosynthetic pathways, one leading to arginine and/or urea and the other to pyrimidine nucleotides. The large subunit (synthetase) binds the substrates ammonia (free or transferred from glutamine from the small subunit), hydrogencarbonate and ATP and carries out an ATP-coupled ligase reaction, activating hydrogencarbonate by forming carboxy phosphate which reacts with ammonia to form carbamoyl phosphate. The chain is Carbamoyl phosphate synthase large chain from Listeria innocua serovar 6a (strain ATCC BAA-680 / CLIP 11262).